Consider the following 240-residue polypeptide: Mediator of RNA polymerase II transcription subunit 19-B (240 aa).

Residues 1–14 show a composition bias toward polar residues; it reads MTEIFSSLYGQPDS. 2 disordered regions span residues 1-29 and 168-240; these read MTEIFSSLYGQPDSQGPAGPSALGFGSGK and PKKK…SSLR. 2 stretches are compositionally biased toward basic residues: residues 168-180 and 209-221; these read PKKKNKHKHKHHR and KKKKKDKKKKKNR.

The protein belongs to the Mediator complex subunit 19 family. Component of the Mediator complex.

The protein localises to the nucleus. Functionally, component of the Mediator complex, a coactivator involved in the regulated transcription of nearly all RNA polymerase II-dependent genes. Mediator functions as a bridge to convey information from gene-specific regulatory proteins to the basal RNA polymerase II transcription machinery. Mediator is recruited to promoters by direct interactions with regulatory proteins and serves as a scaffold for the assembly of a functional preinitiation complex with RNA polymerase II and the general transcription factors. This chain is Mediator of RNA polymerase II transcription subunit 19-B (med19b), found in Danio rerio (Zebrafish).